The following is a 181-amino-acid chain: ECF RNA polymerase sigma factor RpoE (181 aa).

The segment at 29-96 (LFQHFAPKVK…RRIDGLRKDR (68 aa)) is sigma-70 factor domain-2. The Interaction with polymerase core subunit RpoC signature appears at 53 to 56 (ECAQ). The segment at 129 to 178 (AIARLPEAQRALIERAFFGDLTHRELAAETGLPLGTIKSRIRLALDRLRQ) is sigma-70 factor domain-4. Positions 151–170 (HRELAAETGLPLGTIKSRIR) form a DNA-binding region, H-T-H motif.

This sequence belongs to the sigma-70 factor family. ECF subfamily. In terms of assembly, interacts transiently with the RNA polymerase catalytic core formed by RpoA, RpoB, RpoC and RpoZ (2 alpha, 1 beta, 1 beta' and 1 omega subunit) to form the RNA polymerase holoenzyme that can initiate transcription. Forms a 1:1 complex (via sigma-70 factor domain 4) with anti-sigma factor ChrR; this inhibits the interaction of RpoE with the RNA polymerase catalytic core.

Its function is as follows. Sigma factors are initiation factors that promote the attachment of RNA polymerase to specific initiation sites and are then released. Extracytoplasmic function (ECF) sigma factors are held in an inactive form by a cognate anti-sigma factor until released. Sigma-E controls a transcriptional response to singlet oxygen, a by-product of photosynthesis; its continuous activity requires constant exposure to singlet oxygen. The regulon has about 180 genes that protect against or repair damage induced by singlet oxygen, including itself and rpoH2, a heat shock-responsive sigma factor. This is ECF RNA polymerase sigma factor RpoE (rpoE) from Cereibacter sphaeroides (strain ATCC 17023 / DSM 158 / JCM 6121 / CCUG 31486 / LMG 2827 / NBRC 12203 / NCIMB 8253 / ATH 2.4.1.) (Rhodobacter sphaeroides).